The sequence spans 417 residues: Succinate--CoA ligase [ADP-forming] subunit beta, mitochondrial (417 aa).

A mitochondrion-targeting transit peptide spans 1–24; the sequence is MLRKLANQSLSVAGKWQQQQLRRL. Positions 32–275 constitute an ATP-grasp domain; that stretch reads AELMSKYGIN…SSQEDPREVA (244 aa). Residues Lys-71, 78 to 80, and Glu-138 contribute to the ATP site; that span reads GRG. Mg(2+)-binding residues include Asn-230 and Asp-244. Substrate is bound by residues Asn-295 and 352-354; that span reads GIM.

Belongs to the succinate/malate CoA ligase beta subunit family. In terms of assembly, heterodimer of an alpha and a beta subunit. Requires Mg(2+) as cofactor. In terms of tissue distribution, expressed in roots, stems, flowers, leaves and fruits.

The protein resides in the mitochondrion. It carries out the reaction succinate + ATP + CoA = succinyl-CoA + ADP + phosphate. Its pathway is carbohydrate metabolism; tricarboxylic acid cycle; succinate from succinyl-CoA (ligase route): step 1/1. Succinyl-CoA synthetase functions in the citric acid cycle (TCA), coupling the hydrolysis of succinyl-CoA to the synthesis of ATP and thus represents the only step of substrate-level phosphorylation in the TCA. The beta subunit provides nucleotide specificity of the enzyme and binds the substrate succinate, while the binding sites for coenzyme A and phosphate are found in the alpha subunit. The polypeptide is Succinate--CoA ligase [ADP-forming] subunit beta, mitochondrial (Solanum lycopersicum (Tomato)).